We begin with the raw amino-acid sequence, 120 residues long: Large ribosomal subunit protein uL18 (120 aa).

Belongs to the universal ribosomal protein uL18 family. Part of the 50S ribosomal subunit; part of the 5S rRNA/L5/L18/L25 subcomplex. Contacts the 5S and 23S rRNAs.

This is one of the proteins that bind and probably mediate the attachment of the 5S RNA into the large ribosomal subunit, where it forms part of the central protuberance. This Bacillus pumilus (strain SAFR-032) protein is Large ribosomal subunit protein uL18.